Here is a 223-residue protein sequence, read N- to C-terminus: Putative 3-methyladenine DNA glycosylase (223 aa).

It belongs to the DNA glycosylase MPG family.

The chain is Putative 3-methyladenine DNA glycosylase from Pseudomonas syringae pv. tomato (strain ATCC BAA-871 / DC3000).